Reading from the N-terminus, the 440-residue chain is Thymidine phosphorylase (440 aa).

This sequence belongs to the thymidine/pyrimidine-nucleoside phosphorylase family. Homodimer.

It carries out the reaction thymidine + phosphate = 2-deoxy-alpha-D-ribose 1-phosphate + thymine. It participates in pyrimidine metabolism; dTMP biosynthesis via salvage pathway; dTMP from thymine: step 1/2. Functionally, the enzymes which catalyze the reversible phosphorolysis of pyrimidine nucleosides are involved in the degradation of these compounds and in their utilization as carbon and energy sources, or in the rescue of pyrimidine bases for nucleotide synthesis. The polypeptide is Thymidine phosphorylase (Burkholderia pseudomallei (strain 1106a)).